Reading from the N-terminus, the 604-residue chain is Kelch-like protein 20 (604 aa).

In terms of domain architecture, BTB spans 63–130 (CDVVLVVGAK…SYTSQITVEE (68 aa)). The BACK domain maps to 165-267 (CLGIRAFADT…SPKFLVGTVG (103 aa)). 6 Kelch repeats span residues 314-360 (VLFA…VLDD), 362-408 (LYAV…VLGG), 409-455 (YLYA…VLGG), 457-502 (LYAV…VYQD), 504-549 (IYAV…VVNG), and 551-596 (LMAV…VIKM).

As to quaternary structure, component of the BCR(KLHL20) E3 ubiquitin ligase complex, at least composed of cul3, klhl20 and rbx1.

The protein resides in the cytoplasm. Its subcellular location is the perinuclear region. The protein localises to the nucleus. It functions in the pathway protein modification; protein ubiquitination. Substrate-specific adapter of a BCR (BTB-CUL3-RBX1) E3 ubiquitin-protein ligase complex involved in interferon response and anterograde Golgi to endosome transport. The BCR(KLHL20) E3 ubiquitin ligase complex mediates the ubiquitination of target proteins, leading to their degradation by the proteasome. It also specifically mediates 'Lys-33'-linked ubiquitination. The protein is Kelch-like protein 20 (klhl20) of Xenopus laevis (African clawed frog).